A 480-amino-acid polypeptide reads, in one-letter code: Aspartyl/glutamyl-tRNA(Asn/Gln) amidotransferase subunit B (480 aa).

This sequence belongs to the GatB/GatE family. GatB subfamily. As to quaternary structure, heterotrimer of A, B and C subunits.

The enzyme catalyses L-glutamyl-tRNA(Gln) + L-glutamine + ATP + H2O = L-glutaminyl-tRNA(Gln) + L-glutamate + ADP + phosphate + H(+). The catalysed reaction is L-aspartyl-tRNA(Asn) + L-glutamine + ATP + H2O = L-asparaginyl-tRNA(Asn) + L-glutamate + ADP + phosphate + 2 H(+). In terms of biological role, allows the formation of correctly charged Asn-tRNA(Asn) or Gln-tRNA(Gln) through the transamidation of misacylated Asp-tRNA(Asn) or Glu-tRNA(Gln) in organisms which lack either or both of asparaginyl-tRNA or glutaminyl-tRNA synthetases. The reaction takes place in the presence of glutamine and ATP through an activated phospho-Asp-tRNA(Asn) or phospho-Glu-tRNA(Gln). In Streptococcus pneumoniae (strain P1031), this protein is Aspartyl/glutamyl-tRNA(Asn/Gln) amidotransferase subunit B.